Consider the following 191-residue polypeptide: Protein GrpE (191 aa).

This sequence belongs to the GrpE family. As to quaternary structure, homodimer.

The protein localises to the cytoplasm. Participates actively in the response to hyperosmotic and heat shock by preventing the aggregation of stress-denatured proteins, in association with DnaK and GrpE. It is the nucleotide exchange factor for DnaK and may function as a thermosensor. Unfolded proteins bind initially to DnaJ; upon interaction with the DnaJ-bound protein, DnaK hydrolyzes its bound ATP, resulting in the formation of a stable complex. GrpE releases ADP from DnaK; ATP binding to DnaK triggers the release of the substrate protein, thus completing the reaction cycle. Several rounds of ATP-dependent interactions between DnaJ, DnaK and GrpE are required for fully efficient folding. This Listeria monocytogenes serotype 1/2a (strain 10403S) protein is Protein GrpE.